Consider the following 193-residue polypeptide: Xanthine phosphoribosyltransferase (193 aa).

L20 and T27 together coordinate xanthine. 5-phospho-alpha-D-ribose 1-diphosphate is bound at residue 128–132 (ANGQA). K156 contributes to the xanthine binding site.

The protein belongs to the purine/pyrimidine phosphoribosyltransferase family. Xpt subfamily. As to quaternary structure, homodimer.

It is found in the cytoplasm. The enzyme catalyses XMP + diphosphate = xanthine + 5-phospho-alpha-D-ribose 1-diphosphate. It participates in purine metabolism; XMP biosynthesis via salvage pathway; XMP from xanthine: step 1/1. Functionally, converts the preformed base xanthine, a product of nucleic acid breakdown, to xanthosine 5'-monophosphate (XMP), so it can be reused for RNA or DNA synthesis. This Streptococcus gordonii (strain Challis / ATCC 35105 / BCRC 15272 / CH1 / DL1 / V288) protein is Xanthine phosphoribosyltransferase.